We begin with the raw amino-acid sequence, 180 residues long: p-cumate 2,3-dioxygenase system, small oxygenase component (180 aa).

It belongs to the bacterial ring-hydroxylating dioxygenase beta subunit family. The p-cumate 2,3-dioxygenase multicomponent enzyme system is composed of an electron transfer component and a dioxygenase component (iron sulfur protein (ISP)). The electron transfer component is composed of a ferredoxin reductase (CmtAa) and a ferredoxin (CmtAd), and the dioxygenase component is formed of a large alpha subunit (CmtAb) and a small beta subunit (CmtAc).

It participates in aromatic compound metabolism; p-cumate degradation; acetaldehyde and pyruvate from p-cumate. Component of the p-cumate 2,3-dioxygenase multicomponent enzyme system which catalyzes the incorporation of both atoms of molecular oxygen into p-cumate to form cis-2,3-dihydroxy-2,3-dihydro-p-cumate. The beta subunit seems to have a structural role in the holoenzyme. Also able to catalyze the cis-dihydroxylation of indole-2-carboxylate and indole-3-carboxylate. The chain is p-cumate 2,3-dioxygenase system, small oxygenase component from Pseudomonas putida (Arthrobacter siderocapsulatus).